The following is a 372-amino-acid chain: Adaptive-response sensory kinase SasA (372 aa).

A Histidine kinase domain is found at 147 to 360; the sequence is MVAHELRTPL…CFHFTVPVWQ (214 aa). A Phosphohistidine; by autocatalysis modification is found at histidine 150.

Homooligomerizes. Interacts with KaiC. Participates in the KaiBC complex, whose core is composed of a KaiC homohexamer and 6 KaiB.

It catalyses the reaction ATP + protein L-histidine = ADP + protein N-phospho-L-histidine.. Member of the two-component regulatory system SasA/RpaA involved in genome-wide circadian gene expression. One of several clock output pathways. Participates in the Kai clock protein complex, the main circadian regulator in cyanobacteria, via its interaction with KaiC. KaiC enhances the autophosphorylation activity of SasA, which then transfers its phosphate group to RpaA to activate it. In addition to its output function, recruits fold-shifted KaiB (KaiB(fs)) to KaiC to cooperatively form the KaiB(6):KaiC(6) complex (independent of SasA kinase activity). Required for robustness of the circadian rhythm of gene expression and is involved in clock output, also required for adaptation to light/dark cycles. In Prochlorococcus marinus (strain MIT 9301), this protein is Adaptive-response sensory kinase SasA.